A 362-amino-acid chain; its full sequence is tRNA N6-adenosine threonylcarbamoyltransferase (362 aa).

Residues histidine 116 and histidine 120 each coordinate Fe cation. Substrate contacts are provided by residues 138–142 (LVSGG), aspartate 171, glycine 184, and asparagine 284. Aspartate 312 provides a ligand contact to Fe cation.

Belongs to the KAE1 / TsaD family. Requires Fe(2+) as cofactor.

It is found in the cytoplasm. The catalysed reaction is L-threonylcarbamoyladenylate + adenosine(37) in tRNA = N(6)-L-threonylcarbamoyladenosine(37) in tRNA + AMP + H(+). Required for the formation of a threonylcarbamoyl group on adenosine at position 37 (t(6)A37) in tRNAs that read codons beginning with adenine. Is involved in the transfer of the threonylcarbamoyl moiety of threonylcarbamoyl-AMP (TC-AMP) to the N6 group of A37, together with TsaE and TsaB. TsaD likely plays a direct catalytic role in this reaction. This chain is tRNA N6-adenosine threonylcarbamoyltransferase, found in Chelativorans sp. (strain BNC1).